The sequence spans 129 residues: Small ribosomal subunit protein uS11 (129 aa).

In terms of assembly, part of the 30S ribosomal subunit. Interacts with proteins S7 and S18. Binds to IF-3. May be methylated on an undetermined residue.

Located on the platform of the 30S subunit, it bridges several disparate RNA helices of the 16S rRNA. Forms part of the Shine-Dalgarno cleft in the 70S ribosome. This chain is Small ribosomal subunit protein uS11, found in Rhodopseudomonas palustris (strain ATCC BAA-98 / CGA009).